We begin with the raw amino-acid sequence, 380 residues long: Cytochrome b (380 aa).

Helical transmembrane passes span F33–M53, W77–V98, W113–L133, and F178–L198. Heme b-binding residues include H83 and H97. The heme b site is built by H182 and H196. H201 contributes to the a ubiquinone binding site. 4 helical membrane passes run Y226–S246, L288–H308, P320–G340, and F347–P367.

The protein belongs to the cytochrome b family. As to quaternary structure, the cytochrome bc1 complex contains 3 respiratory subunits (MT-CYB, CYC1 and UQCRFS1), 2 core proteins (UQCRC1 and UQCRC2) and probably 6 low-molecular weight proteins. It depends on heme b as a cofactor.

It is found in the mitochondrion inner membrane. Functionally, component of the ubiquinol-cytochrome c reductase complex (complex III or cytochrome b-c1 complex) that is part of the mitochondrial respiratory chain. The b-c1 complex mediates electron transfer from ubiquinol to cytochrome c. Contributes to the generation of a proton gradient across the mitochondrial membrane that is then used for ATP synthesis. In Acipenser sinensis (Chinese sturgeon), this protein is Cytochrome b (mt-cyb).